The chain runs to 417 residues: Nuclear envelope integral membrane protein 2 (417 aa).

The first 24 residues, 1–24 (MGPRQGRWWLLLWLPPLATLPVRG), serve as a signal peptide directing secretion. A run of 5 helical transmembrane segments spans residues 148 to 168 (NIMDFKLFLVFVAGVFLFFYA), 177 to 197 (FYYSSGTVLGVLMTLVFVLLL), 207 to 227 (TFWALMVGCWFASVYIVCQLM), 239 to 259 (IYVLGYVLIVGFFSFVVCYKH), and 280 to 300 (LVLVYAGVAVPQFAYAAIILL).

The protein belongs to the NEMP family.

Its subcellular location is the nucleus inner membrane. This is Nuclear envelope integral membrane protein 2 (NEMP2) from Homo sapiens (Human).